Here is a 193-residue protein sequence, read N- to C-terminus: dCTP deaminase, dUMP-forming (193 aa).

DCTP contacts are provided by residues 107-112, Asp-125, 133-135, Gln-154, and Tyr-168; these read RSSLGR and TLE. Residue Glu-135 is the Proton donor/acceptor of the active site. The disordered stretch occupies residues 169 to 193; the sequence is AESSGKYHGDERPSPSKMHLDFCRG. Residues 173 to 193 are compositionally biased toward basic and acidic residues; it reads GKYHGDERPSPSKMHLDFCRG.

The protein belongs to the dCTP deaminase family. In terms of assembly, homotrimer.

It carries out the reaction dCTP + 2 H2O = dUMP + NH4(+) + diphosphate. It functions in the pathway pyrimidine metabolism; dUMP biosynthesis; dUMP from dCTP: step 1/1. In terms of biological role, bifunctional enzyme that catalyzes both the deamination of dCTP to dUTP and the hydrolysis of dUTP to dUMP without releasing the toxic dUTP intermediate. The sequence is that of dCTP deaminase, dUMP-forming from Methanopyrus kandleri (strain AV19 / DSM 6324 / JCM 9639 / NBRC 100938).